We begin with the raw amino-acid sequence, 426 residues long: Serine--tRNA ligase (426 aa).

Residue 233 to 235 (TSE) coordinates L-serine. 264-266 (RAE) provides a ligand contact to ATP. Glu287 serves as a coordination point for L-serine. Position 351 to 354 (351 to 354 (EISS)) interacts with ATP. Ser387 contributes to the L-serine binding site.

The protein belongs to the class-II aminoacyl-tRNA synthetase family. Type-1 seryl-tRNA synthetase subfamily. In terms of assembly, homodimer. The tRNA molecule binds across the dimer.

The protein localises to the cytoplasm. It carries out the reaction tRNA(Ser) + L-serine + ATP = L-seryl-tRNA(Ser) + AMP + diphosphate + H(+). The catalysed reaction is tRNA(Sec) + L-serine + ATP = L-seryl-tRNA(Sec) + AMP + diphosphate + H(+). Its pathway is aminoacyl-tRNA biosynthesis; selenocysteinyl-tRNA(Sec) biosynthesis; L-seryl-tRNA(Sec) from L-serine and tRNA(Sec): step 1/1. Catalyzes the attachment of serine to tRNA(Ser). Is also able to aminoacylate tRNA(Sec) with serine, to form the misacylated tRNA L-seryl-tRNA(Sec), which will be further converted into selenocysteinyl-tRNA(Sec). The protein is Serine--tRNA ligase of Xanthomonas euvesicatoria pv. vesicatoria (strain 85-10) (Xanthomonas campestris pv. vesicatoria).